The following is a 154-amino-acid chain: Ribonuclease 1 (154 aa).

The protein belongs to the BetVI family.

The protein localises to the cytoplasm. In terms of biological role, catalyzes the two-stage endonucleolytic cleavage to 3'-phosphomononucleotides and 3'-phosphooligonucleotides with 2',3'-cyclic phosphate intermediates. This Panax ginseng (Korean ginseng) protein is Ribonuclease 1.